The primary structure comprises 236 residues: Carbonyl reductase family member 4 (236 aa).

NADP(+) contacts are provided by residues 11–14, 34–35, Asp-55, and 82–84; these read SRGI, RN, and SAG. Residue Ser-134 coordinates substrate. NADP(+) contacts are provided by residues Tyr-147, Lys-151, and 180–182; that span reads IRT. Tyr-147 (proton acceptor) is an active-site residue.

Belongs to the short-chain dehydrogenases/reductases (SDR) family. Homotetramer (in vitro). Heterotetramer with HSD17B8; contains two molecules each of HSD17B8 and CBR4.

It is found in the mitochondrion matrix. The protein operates within lipid metabolism; fatty acid biosynthesis. Its function is as follows. The heterotetramer with HSD17B8 has NADH-dependent 3-ketoacyl-acyl carrier protein reductase activity, and thereby plays a role in mitochondrial fatty acid biosynthesis. Within the heterotetramer, HSD17B8 binds NADH; CBR4 binds NADPD. The homotetramer has NADPH-dependent quinone reductase activity. Both homotetramer and the heterotetramer have broad in vitro substrate specificity and can reduce 9,10-phenanthrenequinone, 1,4-benzoquinone and various other o-quinones and p-quinones. This Xenopus laevis (African clawed frog) protein is Carbonyl reductase family member 4 (cbr4).